Reading from the N-terminus, the 944-residue chain is Breast cancer type 2 susceptibility protein homolog (944 aa).

Basic and acidic residues-rich tracts occupy residues 325 to 348 (KKVK…ESKI) and 415 to 431 (NSIK…ETPN). Disordered regions lie at residues 325–354 (KKVK…ASCD) and 415–440 (NSIK…SSHQ). BRCA2 repeat units lie at residues 543–577 (AEPE…EFQS), 644–678 (NESQ…QSRA), and 719–753 (SETE…EFQA). 2 disordered regions span residues 823-854 (LCSQ…LDQA) and 876-944 (SSTE…RSRY). Polar residues-rich tracts occupy residues 838 to 852 (IHSS…SPLD) and 876 to 885 (SSTETSTSCA). The segment covering 904–921 (ADRDLNRSKDCAKNRQDA) has biased composition (basic and acidic residues). Residues 932 to 944 (KKSRRLGLSRSRY) show a composition bias toward basic residues.

Interacts with Rad9 and spn-A/Rad51.

It localises to the nucleus. Functionally, involved in and required for double-strand break repair by meiotic and mitotic homologous recombination. During meiosis, has a dual role in the repair of meiotic double-stranded breaks and the efficient activation of the meiotic recombination checkpoint. This chain is Breast cancer type 2 susceptibility protein homolog, found in Drosophila simulans (Fruit fly).